Reading from the N-terminus, the 262-residue chain is Probable carboxylesterase Culp3 (262 aa).

A signal peptide spans 1–41; the sequence is MNNRPIRLLTSGRAGLGAGALITAVVLLIALGAVWTPVAFA. Cys-44 and Cys-114 are joined by a disulfide. Ser-125 (nucleophile) is an active-site residue. An intrachain disulfide couples Cys-188 to Cys-195. Residue Asp-192 is part of the active site. The Proton donor/acceptor role is filled by His-206. The segment at 241–262 is disordered; that stretch reads LPGSVLQMPGTAAPAPESLHGR.

It belongs to the cutinase family.

The protein localises to the secreted. Its function is as follows. Shows weak esterase activity with the p-nitrophenol-linked aliphatic ester pNP-butyrate. Does not exhibit cutinase activity. The protein is Probable carboxylesterase Culp3 (cut3) of Mycobacterium tuberculosis (strain ATCC 25618 / H37Rv).